We begin with the raw amino-acid sequence, 120 residues long: Large ribosomal subunit protein uL18 (120 aa).

The protein belongs to the universal ribosomal protein uL18 family. As to quaternary structure, part of the 50S ribosomal subunit; part of the 5S rRNA/L5/L18/L25 subcomplex. Contacts the 5S and 23S rRNAs.

Its function is as follows. This is one of the proteins that bind and probably mediate the attachment of the 5S RNA into the large ribosomal subunit, where it forms part of the central protuberance. This Rhizobium meliloti (strain 1021) (Ensifer meliloti) protein is Large ribosomal subunit protein uL18.